The sequence spans 153 residues: Small ribosomal subunit protein uS13 (153 aa).

This sequence belongs to the universal ribosomal protein uS13 family. Part of the 30S ribosomal subunit. Forms a loose heterodimer with protein S19. Forms two bridges to the 50S subunit in the 70S ribosome.

Functionally, located at the top of the head of the 30S subunit, it contacts several helices of the 16S rRNA. In the 70S ribosome it contacts the 23S rRNA (bridge B1a) and protein L5 of the 50S subunit (bridge B1b), connecting the 2 subunits; these bridges are implicated in subunit movement. This chain is Small ribosomal subunit protein uS13, found in Pyrobaculum calidifontis (strain DSM 21063 / JCM 11548 / VA1).